Here is a 633-residue protein sequence, read N- to C-terminus: Chitinase 2 (633 aa).

The 452-residue stretch at 151–602 (PKLSAYITDW…NAAREGLGYV (452 aa)) folds into the GH18 domain. Residues 275 to 276 (QN) and 306 to 309 (GGWS) each bind chitin. E349 acts as the Proton donor in catalysis. Residues Y350, 422 to 425 (MSYD), and W582 contribute to the chitin site.

It belongs to the glycosyl hydrolase 18 family. As to quaternary structure, semipurified toxin complex consists of at least YenA1-YenA2-YenB-YenC1-YenC2-Chi1-Chi2. The Yen-TC:K9 subcomplex is about 26 nm tall and 22 nm in diameter with 5-fold symmetry and 5 copies of YenA1, YenA2, Chi1 and Chi2; the chitinase subunits may be solvent accessible on the exterior the complex. The Yen-TC:K9 subcomplex has no insecticidal activity. The native complex with additional YenB, YenC1 and YenC2 subunits is 16 nm taller and is insecticidal; the toxicity-conferring subunits are present at about 1 copy each.

It localises to the secreted. The enzyme catalyses Random endo-hydrolysis of N-acetyl-beta-D-glucosaminide (1-&gt;4)-beta-linkages in chitin and chitodextrins.. With respect to regulation, toxin complex is secreted when grown at 25 degrees Celsius or less; at higher temperatures the proteins are present intracellularly but not secreted. Functionally, part of an orally active toxin complex (TC) with strong insecticidal effects on larvae of the Coleoptera Costelytra zealandica, Acrossidius tasmania and Adoryphorus couloni and some Lepidoptera larvae. The TC has an endochitinase activity. This subunit might aid infection by degradation of the larval peritrophic membrane. In Yersinia entomophaga, this protein is Chitinase 2.